A 475-amino-acid polypeptide reads, in one-letter code: Adenylyl cyclase-associated protein 1 (475 aa).

The residue at position 2 (A2) is an N-acetylalanine. At Y31 the chain carries Phosphotyrosine. S34 is modified (phosphoserine). An N6-acetyllysine modification is found at K81. 2 disordered regions span residues 216–237 (ELSGLPSGPSAGSCPPPPPPCP) and 278–319 (MKTH…KKEP). Positions 218–228 (SGLPSGPSAGS) are enriched in low complexity. K287 is modified (N6-methyllysine). Residues S290, S295, and S301 each carry the phosphoserine modification. T307 is subject to Phosphothreonine. S308 and S310 each carry phosphoserine. A C-CAP/cofactor C-like domain is found at 319–453 (PAVLELEGKK…EGGDFNEFPV (135 aa)). Residue K348 forms a Glycyl lysine isopeptide (Lys-Gly) (interchain with G-Cter in SUMO1) linkage.

It belongs to the CAP family. As to quaternary structure, homodimer. Binds actin monomers.

It localises to the cell membrane. Directly regulates filament dynamics and has been implicated in a number of complex developmental and morphological processes, including mRNA localization and the establishment of cell polarity. In Homo sapiens (Human), this protein is Adenylyl cyclase-associated protein 1 (CAP1).